We begin with the raw amino-acid sequence, 217 residues long: Probable septum site-determining protein MinC (217 aa).

The protein belongs to the MinC family. Interacts with MinD and FtsZ.

In terms of biological role, cell division inhibitor that blocks the formation of polar Z ring septums. Rapidly oscillates between the poles of the cell to destabilize FtsZ filaments that have formed before they mature into polar Z rings. Prevents FtsZ polymerization. This chain is Probable septum site-determining protein MinC, found in Pelotomaculum thermopropionicum (strain DSM 13744 / JCM 10971 / SI).